Consider the following 561-residue polypeptide: Potassium-transporting ATPase potassium-binding subunit (561 aa).

The next 10 helical transmembrane spans lie at 4–24, 65–85, 133–153, 177–197, 253–273, 285–305, 380–400, 417–437, 484–504, and 528–548; these read IVMQ…PLGI, AVSV…VLML, IGLT…LFAV, LYIL…QGVV, FTNL…VVMF, AIMT…TISE, GLYG…LLVG, MVCL…AVAV, MVGA…ALYL, and FIGL…LPAL.

This sequence belongs to the KdpA family. As to quaternary structure, the system is composed of three essential subunits: KdpA, KdpB and KdpC.

It is found in the cell membrane. Its function is as follows. Part of the high-affinity ATP-driven potassium transport (or Kdp) system, which catalyzes the hydrolysis of ATP coupled with the electrogenic transport of potassium into the cytoplasm. This subunit binds the extracellular potassium ions and delivers the ions to the membrane domain of KdpB through an intramembrane tunnel. The polypeptide is Potassium-transporting ATPase potassium-binding subunit (Listeria monocytogenes serotype 4b (strain CLIP80459)).